The following is a 129-amino-acid chain: MRKIYATGKRKTAIAKVWLTPGKGELSINEQSLNQWLGGHEAIKMKVMQPLLLTKQEQSVDIKAVVFGGGYSAQAEALRHGISKALNAYDIAFRAVLKPKGLLTRDSRVVERKKYGKRKARRSPQFSKR.

Belongs to the universal ribosomal protein uS9 family.

This Helicobacter pylori (strain Shi470) protein is Small ribosomal subunit protein uS9.